Consider the following 575-residue polypeptide: MGFRINTNIGALNAHANSVVNARELDKSLSRLSSGLRINSAADDASGMAIADSLRSQAATLGQAINNGNDAIGILQTADKAMDEQLKILDTIKTKATQAAQDGQSLKTRTMLQADINRLMEELDNIANTTSFNGKQLLSGNFINQEFQIGASSNQTIKATIGATQSSKIGLTRFETGSRISVGGEVQFTLKNYNGIDDFKFQKVVISTSVGTGLGALAEEINKSADQTGVRATFTVETRGMGAVRAGATSEDFAINGVKIGQIEYKDGDANGALVSAINSVKDTTGVEASIDENGKLLLTSREGRGIKIEGNIGRGAFINPNMLENYGRLSLVKNDGKDILISGTNLSAIGFGTGNMISQASVSLRESKGQIDANVADAMGFNSANKGNILGGYSSVSAYMSSTGSGFSSGSGFSVGSGKNYSTGFANTIAISAASQLSAVYNVSAGSGFSSGSNLSQFATMKTSAGNTLGVKDETAGVTTLKGAMAVMDIAETAITNLDQIRADIGSVQNQLQVTINNITVTQVNVKAAESTIRDVDFAAESANFSKYNILAQSGSYAMSQANAVQQNVLKLLQ.

This sequence belongs to the bacterial flagellin family. In terms of assembly, heteromer of flaA and flaB.

It is found in the secreted. Its subcellular location is the bacterial flagellum. Functionally, flagellin is the subunit protein which polymerizes to form the filaments of bacterial flagella. The protein is Flagellin B (flaB) of Campylobacter jejuni.